The sequence spans 535 residues: cAMP-regulated D2 protein (535 aa).

The N-terminal stretch at 1 to 20 (MNKLLVFILLLLLLINISFA) is a signal peptide. The cysteines at positions 89 and 109 are disulfide-linked. Ser213 acts as the Acyl-ester intermediate in catalysis. A disulfide bond links Cys265 and Cys272. Catalysis depends on charge relay system residues Glu338 and His440. Asn500 is a glycosylation site (N-linked (GlcNAc...) asparagine).

It belongs to the type-B carboxylesterase/lipase family.

The protein resides in the cytoplasmic vesicle. It is found in the esterosome membrane. In Dictyostelium discoideum (Social amoeba), this protein is cAMP-regulated D2 protein (D2).